The sequence spans 130 residues: Small ribosomal subunit protein uS8 (130 aa).

Belongs to the universal ribosomal protein uS8 family. As to quaternary structure, part of the 30S ribosomal subunit. Contacts proteins S5 and S12.

Functionally, one of the primary rRNA binding proteins, it binds directly to 16S rRNA central domain where it helps coordinate assembly of the platform of the 30S subunit. This Pseudomonas syringae pv. tomato (strain ATCC BAA-871 / DC3000) protein is Small ribosomal subunit protein uS8.